We begin with the raw amino-acid sequence, 128 residues long: Claw keratin (128 aa).

2 repeat units span residues 83 to 91 and 92 to 100. The interval 83–104 is 3 X 9 AA tandem repeats, Gly-rich; it reads GGYGGLGGYGGYGGLGGYGGYG. The 3; approximate repeat unit spans residues 101 to 109; sequence GGYGGFGSC.

The protein belongs to the avian keratin family. As to expression, abundantly expressed in the claw and at a low level in feather tissue.

This is Claw keratin (CKER1) from Gallus gallus (Chicken).